A 76-amino-acid chain; its full sequence is Beta-defensin 121 (76 aa).

Positions methionine 1–alanine 15 are cleaved as a signal peptide. Disulfide bonds link cysteine 23–cysteine 50, cysteine 30–cysteine 44, and cysteine 34–cysteine 51.

Belongs to the beta-defensin family.

Its subcellular location is the secreted. Has antibacterial activity. The protein is Beta-defensin 121 (DEFB121) of Pan troglodytes (Chimpanzee).